Consider the following 478-residue polypeptide: Ribulose bisphosphate carboxylase large chain (478 aa).

A propeptide spanning residues 1–2 is cleaved from the precursor; the sequence is MS. An N-acetylproline modification is found at P3. K14 is modified (N6,N6,N6-trimethyllysine). Residues N123 and T173 each contribute to the substrate site. The Proton acceptor role is filled by K175. K177 contacts substrate. Residues K201, D203, and E204 each contribute to the Mg(2+) site. N6-carboxylysine is present on K201. Residue H294 is the Proton acceptor of the active site. Substrate is bound by residues R295, H327, and S379.

The protein belongs to the RuBisCO large chain family. Type I subfamily. As to quaternary structure, heterohexadecamer of 8 large chains and 8 small chains; disulfide-linked. The disulfide link is formed within the large subunit homodimers. The cofactor is Mg(2+). Post-translationally, the disulfide bond which can form in the large chain dimeric partners within the hexadecamer appears to be associated with oxidative stress and protein turnover.

It localises to the plastid. The protein resides in the chloroplast. The catalysed reaction is 2 (2R)-3-phosphoglycerate + 2 H(+) = D-ribulose 1,5-bisphosphate + CO2 + H2O. The enzyme catalyses D-ribulose 1,5-bisphosphate + O2 = 2-phosphoglycolate + (2R)-3-phosphoglycerate + 2 H(+). In terms of biological role, ruBisCO catalyzes two reactions: the carboxylation of D-ribulose 1,5-bisphosphate, the primary event in carbon dioxide fixation, as well as the oxidative fragmentation of the pentose substrate in the photorespiration process. Both reactions occur simultaneously and in competition at the same active site. The polypeptide is Ribulose bisphosphate carboxylase large chain (Lemna minor (Common duckweed)).